The chain runs to 498 residues: Glycerol kinase (498 aa).

Position 12 (T12) interacts with ADP. 3 residues coordinate ATP: T12, T13, and S14. T12 contacts sn-glycerol 3-phosphate. ADP is bound at residue R16. Sn-glycerol 3-phosphate is bound by residues R82, E83, Y134, and D243. Residues R82, E83, Y134, D243, and Q244 each contribute to the glycerol site. ADP is bound by residues T265 and G308. 4 residues coordinate ATP: T265, G308, Q312, and G412. G412 contacts ADP.

Belongs to the FGGY kinase family.

The catalysed reaction is glycerol + ATP = sn-glycerol 3-phosphate + ADP + H(+). It functions in the pathway polyol metabolism; glycerol degradation via glycerol kinase pathway; sn-glycerol 3-phosphate from glycerol: step 1/1. Inhibited by fructose 1,6-bisphosphate (FBP). Its function is as follows. Key enzyme in the regulation of glycerol uptake and metabolism. Catalyzes the phosphorylation of glycerol to yield sn-glycerol 3-phosphate. This is Glycerol kinase from Rhizobium rhizogenes (strain K84 / ATCC BAA-868) (Agrobacterium radiobacter).